Reading from the N-terminus, the 225-residue chain is Small ribosomal subunit protein uS3 (225 aa).

The KH type-2 domain maps to 38–106 (LRAHLRRKLS…DVALNIVEIR (69 aa)).

Belongs to the universal ribosomal protein uS3 family. In terms of assembly, part of the 30S ribosomal subunit. Forms a tight complex with proteins S10 and S14.

In terms of biological role, binds the lower part of the 30S subunit head. Binds mRNA in the 70S ribosome, positioning it for translation. The protein is Small ribosomal subunit protein uS3 of Gluconacetobacter diazotrophicus (strain ATCC 49037 / DSM 5601 / CCUG 37298 / CIP 103539 / LMG 7603 / PAl5).